We begin with the raw amino-acid sequence, 257 residues long: Cobalt transport protein CbiM (257 aa).

The first 33 residues, 1–33, serve as a signal peptide directing secretion; that stretch reads MVKPTQAKRYASLGAIALLTTSLVVASPNPALA. 6 helical membrane-spanning segments follow: residues 39–59, 74–94, 117–137, 138–158, 171–191, and 214–234; these read GFLPLGWAVGWWLAFLPFLAW, SVLLVALAGAYAFVVSSLKIP, LMAVLGTLVLLFQSLLIAHGG, LTTLGANAFSMAVVGPWLAWL, AIALFAASFISNVGTYTLTSL, and LFAVTQIPLAISEGLLTVLVW.

This sequence belongs to the CbiM family. As to quaternary structure, forms an energy-coupling factor (ECF) transporter complex composed of an ATP-binding protein (A component, CbiO), a transmembrane protein (T component, CbiQ) and 2 possible substrate-capture proteins (S components, CbiM and CbiN) of unknown stoichimetry.

Its subcellular location is the cell inner membrane. It functions in the pathway cofactor biosynthesis; adenosylcobalamin biosynthesis. Part of the energy-coupling factor (ECF) transporter complex CbiMNOQ involved in cobalt import. The polypeptide is Cobalt transport protein CbiM (Thermosynechococcus vestitus (strain NIES-2133 / IAM M-273 / BP-1)).